The chain runs to 664 residues: Exoribonuclease 2 (664 aa).

The 329-residue stretch at arginine 193–isoleucine 521 folds into the RNB domain. Residues glutamine 568–threonine 650 enclose the S1 motif domain.

The protein belongs to the RNR ribonuclease family. RNase II subfamily.

It is found in the cytoplasm. The catalysed reaction is Exonucleolytic cleavage in the 3'- to 5'-direction to yield nucleoside 5'-phosphates.. In terms of biological role, involved in mRNA degradation. Hydrolyzes single-stranded polyribonucleotides processively in the 3' to 5' direction. The sequence is that of Exoribonuclease 2 from Vibrio vulnificus (strain YJ016).